The sequence spans 31 residues: MPTITSYFGFLLAASTITPALFIGLSKIRLI.

Residues 4 to 26 (ITSYFGFLLAASTITPALFIGLS) form a helical membrane-spanning segment.

The protein belongs to the PetL family. In terms of assembly, the 4 large subunits of the cytochrome b6-f complex are cytochrome b6, subunit IV (17 kDa polypeptide, PetD), cytochrome f and the Rieske protein, while the 4 small subunits are PetG, PetL, PetM and PetN. The complex functions as a dimer.

The protein resides in the plastid. The protein localises to the chloroplast thylakoid membrane. Functionally, component of the cytochrome b6-f complex, which mediates electron transfer between photosystem II (PSII) and photosystem I (PSI), cyclic electron flow around PSI, and state transitions. PetL is important for photoautotrophic growth as well as for electron transfer efficiency and stability of the cytochrome b6-f complex. The protein is Cytochrome b6-f complex subunit 6 of Buxus microphylla (Littleleaf boxwood).